A 306-amino-acid polypeptide reads, in one-letter code: Proline-rich transmembrane protein 1 (306 aa).

Residues Met-1–Gln-142 are disordered. Residues Met-1–Tyr-223 lie on the Cytoplasmic side of the membrane. Residues Thr-15–Ala-36 show a composition bias toward pro residues. Residues Ser-40–His-49 show a composition bias toward basic residues. 2 stretches are compositionally biased toward pro residues: residues His-87–Pro-111 and Pro-121–Pro-137. A helical transmembrane segment spans residues Met-224–Phe-244. The Extracellular portion of the chain corresponds to Lys-245–Ser-275. Positions Leu-276–Ala-296 form an intramembrane region, helical. Topologically, residues Ala-297–Pro-306 are extracellular.

This sequence belongs to the CD225/Dispanin family. As to quaternary structure, component of the outer core of AMPAR complex. AMPAR complex consists of an inner core made of 4 pore-forming GluA/GRIA proteins (GRIA1, GRIA2, GRIA3 and GRIA4) and 4 major auxiliary subunits arranged in a twofold symmetry. One of the two pairs of distinct binding sites is occupied either by CNIH2, CNIH3 or CACNG2, CACNG3. The other harbors CACNG2, CACNG3, CACNG4, CACNG8 or GSG1L. This inner core of AMPAR complex is complemented by outer core constituents binding directly to the GluA/GRIA proteins at sites distinct from the interaction sites of the inner core constituents. Outer core constituents include at least PRRT1, PRRT2, CKAMP44/SHISA9, FRRS1L and NRN1. The proteins of the inner and outer core serve as a platform for other, more peripherally associated AMPAR constituents. Alone or in combination, these auxiliary subunits control the gating and pharmacology of the AMPAR complex and profoundly impact their biogenesis and protein processing.

It is found in the cell membrane. The protein localises to the synapse. Required to maintain a pool of extrasynaptic AMPA-regulated glutamate receptors (AMPAR) which is necessary for synapse development and function. Regulates basal AMPAR function and synaptic transmission during development but is dispensable at mature hippocampal synapses. Plays a role in regulating basal phosphorylation levels of glutamate receptor GRIA1 and promotes GRIA1 and GRIA2 cell surface expression. The polypeptide is Proline-rich transmembrane protein 1 (Homo sapiens (Human)).